Consider the following 235-residue polypeptide: Large ribosomal subunit protein uL4 (235 aa).

Residues 45-75 (RAGTASTKTRGEVSGGGRKPWPQKHTGRARH) form a disordered region. A compositionally biased stretch (basic residues) spans 65–75 (WPQKHTGRARH).

Belongs to the universal ribosomal protein uL4 family. Part of the 50S ribosomal subunit.

Functionally, one of the primary rRNA binding proteins, this protein initially binds near the 5'-end of the 23S rRNA. It is important during the early stages of 50S assembly. It makes multiple contacts with different domains of the 23S rRNA in the assembled 50S subunit and ribosome. Forms part of the polypeptide exit tunnel. The sequence is that of Large ribosomal subunit protein uL4 from Thermotoga petrophila (strain ATCC BAA-488 / DSM 13995 / JCM 10881 / RKU-1).